A 569-amino-acid polypeptide reads, in one-letter code: Proline--tRNA ligase (569 aa).

The protein belongs to the class-II aminoacyl-tRNA synthetase family. ProS type 1 subfamily. In terms of assembly, homodimer.

Its subcellular location is the cytoplasm. The catalysed reaction is tRNA(Pro) + L-proline + ATP = L-prolyl-tRNA(Pro) + AMP + diphosphate. In terms of biological role, catalyzes the attachment of proline to tRNA(Pro) in a two-step reaction: proline is first activated by ATP to form Pro-AMP and then transferred to the acceptor end of tRNA(Pro). As ProRS can inadvertently accommodate and process non-cognate amino acids such as alanine and cysteine, to avoid such errors it has two additional distinct editing activities against alanine. One activity is designated as 'pretransfer' editing and involves the tRNA(Pro)-independent hydrolysis of activated Ala-AMP. The other activity is designated 'posttransfer' editing and involves deacylation of mischarged Ala-tRNA(Pro). The misacylated Cys-tRNA(Pro) is not edited by ProRS. This Campylobacter hominis (strain ATCC BAA-381 / DSM 21671 / CCUG 45161 / LMG 19568 / NCTC 13146 / CH001A) protein is Proline--tRNA ligase.